Reading from the N-terminus, the 339-residue chain is Phenylalanine--tRNA ligase alpha subunit (339 aa).

Glu254 provides a ligand contact to Mg(2+).

It belongs to the class-II aminoacyl-tRNA synthetase family. Phe-tRNA synthetase alpha subunit type 1 subfamily. Tetramer of two alpha and two beta subunits. It depends on Mg(2+) as a cofactor.

Its subcellular location is the cytoplasm. It carries out the reaction tRNA(Phe) + L-phenylalanine + ATP = L-phenylalanyl-tRNA(Phe) + AMP + diphosphate + H(+). This is Phenylalanine--tRNA ligase alpha subunit from Clostridium perfringens (strain SM101 / Type A).